Consider the following 155-residue polypeptide: Small ribosomal subunit protein uS7 (155 aa).

Belongs to the universal ribosomal protein uS7 family. As to quaternary structure, part of the 30S ribosomal subunit. Contacts proteins S9 and S11.

Functionally, one of the primary rRNA binding proteins, it binds directly to 16S rRNA where it nucleates assembly of the head domain of the 30S subunit. Is located at the subunit interface close to the decoding center, probably blocks exit of the E-site tRNA. This is Small ribosomal subunit protein uS7 from Thermosipho africanus (strain TCF52B).